The following is a 71-amino-acid chain: Prokaryotic ubiquitin-like protein Pup (71 aa).

Over residues 1 to 18 (MATRDSGGQSQTGRSQQG) the composition is skewed to low complexity. The disordered stretch occupies residues 1 to 42 (MATRDSGGQSQTGRSQQGEEIEDVTTEASPEVAERHAEITED). The interval 27 to 65 (EASPEVAERHAEITEDVDDLLDEIDSVLEENAEEFVRGY) is ARC ATPase binding. A coiled-coil region spans residues 31–60 (EVAERHAEITEDVDDLLDEIDSVLEENAEE). Glutamate 71 is covalently cross-linked (Isoglutamyl lysine isopeptide (Glu-Lys) (interchain with K-? in acceptor proteins)).

This sequence belongs to the prokaryotic ubiquitin-like protein family. Strongly interacts with the proteasome-associated ATPase ARC through a hydrophobic interface; the interacting region of Pup lies in its C-terminal half. There is one Pup binding site per ARC hexamer ring.

Its pathway is protein degradation; proteasomal Pup-dependent pathway. Its function is as follows. Protein modifier that is covalently attached to lysine residues of substrate proteins, thereby targeting them for proteasomal degradation. The tagging system is termed pupylation. In Salinispora arenicola (strain CNS-205), this protein is Prokaryotic ubiquitin-like protein Pup.